A 148-amino-acid polypeptide reads, in one-letter code: Wound-induced proteinase inhibitor 2 (148 aa).

Positions 1 to 25 are cleaved as a signal peptide; that stretch reads MAVHKEVNFVAYLLIVLGMFLYVDA. A 1; trypsin-inhibitory repeat occupies 26-81; sequence KACTRECGNLGFGICPRSEGSPLNPICINCCSGYKGCNYYNSFGKFICEGESDPKR. Disulfide bonds link Cys-28-Cys-116, Cys-32-Cys-112, Cys-40-Cys-122, Cys-52-Cys-89, Cys-55-Cys-73, Cys-56-Cys-85, Cys-62-Cys-98, and Cys-115-Cys-133. Residues 83–141 form a 2; chymotrypsin-inhibitory repeat; it reads NACTFNCDPNIAYSRCPRSQGKSLIYPTGCTTCCTGYKGCYYFGKDGKFVCEGESDEPK.

It belongs to the protease inhibitor I20 (potato type II proteinase inhibitor) family.

It localises to the secreted. Potent inhibitor of both trypsin and chymotrypsin. The protein is Wound-induced proteinase inhibitor 2 of Solanum lycopersicum (Tomato).